Here is a 293-residue protein sequence, read N- to C-terminus: Fructose-bisphosphate aldolase (293 aa).

Serine 50 contributes to the D-glyceraldehyde 3-phosphate binding site. Aspartate 85 acts as the Proton donor in catalysis. The Zn(2+) site is built by histidine 86, aspartate 106, glutamate 136, and histidine 178. Glycine 179 provides a ligand contact to dihydroxyacetone phosphate. Residue histidine 208 coordinates Zn(2+). Dihydroxyacetone phosphate-binding positions include 209-211 (GGS) and 230-233 (NVNT).

Belongs to the class II fructose-bisphosphate aldolase family. Requires Zn(2+) as cofactor.

The enzyme catalyses beta-D-fructose 1,6-bisphosphate = D-glyceraldehyde 3-phosphate + dihydroxyacetone phosphate. Its pathway is carbohydrate degradation; glycolysis; D-glyceraldehyde 3-phosphate and glycerone phosphate from D-glucose: step 4/4. Functionally, catalyzes the aldol condensation of dihydroxyacetone phosphate (DHAP or glycerone-phosphate) with glyceraldehyde 3-phosphate (G3P) to form fructose 1,6-bisphosphate (FBP) in gluconeogenesis and the reverse reaction in glycolysis. This Streptococcus pyogenes serotype M3 (strain ATCC BAA-595 / MGAS315) protein is Fructose-bisphosphate aldolase (fba).